Reading from the N-terminus, the 189-residue chain is Putative manganese efflux pump MntP (189 aa).

A run of 6 helical transmembrane segments spans residues 3–23 (PVSL…AAIG), 41–61 (IIFG…GQAA), 65–85 (VADW…LHMI), 106–128 (WILA…GLAF), 141–161 (GLAT…LGAV), and 168–188 (MVGG…HLSA).

The protein belongs to the MntP (TC 9.B.29) family.

Its subcellular location is the cell inner membrane. In terms of biological role, probably functions as a manganese efflux pump. The sequence is that of Putative manganese efflux pump MntP from Pseudomonas aeruginosa (strain UCBPP-PA14).